Here is a 274-residue protein sequence, read N- to C-terminus: Protein LNK4 (274 aa).

A disordered region spans residues 209-249 (NSQQKSDSNSDEFLEDRTRETEFETKLNRQSRGQSHIQQDG). Residues 223–235 (EDRTRETEFETKL) show a composition bias toward basic and acidic residues. The segment covering 236–249 (NRQSRGQSHIQQDG) has biased composition (polar residues).

In terms of assembly, interacts with REV8.

Functionally, probable transcriptional coactivator. The polypeptide is Protein LNK4 (Arabidopsis thaliana (Mouse-ear cress)).